A 72-amino-acid polypeptide reads, in one-letter code: Small ribosomal subunit protein bS20 (72 aa).

The protein belongs to the bacterial ribosomal protein bS20 family.

In terms of biological role, binds directly to 16S ribosomal RNA. This is Small ribosomal subunit protein bS20 (rpsT) from Klebsiella pneumoniae.